The chain runs to 235 residues: Eukaryotic translation initiation factor 4E-1 (235 aa).

Positions 1 to 36 (MVVEETIKATSTEDLSNTIANQNPRGRGGDEDEELE) are disordered. The segment covering 8–24 (KATSTEDLSNTIANQNP) has biased composition (polar residues). EIF4G-binding regions lie at residues 60-63 (HPLE) and 70-106 (FDNP…NNIH). MRNA-binding positions include 78-83 (KQATWG), Lys110, and 128-129 (WE). Cys133 and Cys171 are oxidised to a cystine. Positions 154-163 (YTLLAMIGEQ) are EIF4G-binding. Residues 178 to 183 (RSGQDK) and 223 to 227 (KKFDR) each bind mRNA.

The protein belongs to the eukaryotic initiation factor 4E family. In terms of assembly, EIF4F is a multi-subunit complex, the composition of which varies with external and internal environmental conditions. It is composed of at least EIF4A, EIF4E and EIF4G. EIF4E is also known to interact with other partners. In higher plants two isoforms of EIF4F have been identified, named isoform EIF4F and isoform EIF(iso)4F. Isoform EIF4F has subunits p220 and p26, whereas isoform EIF(iso)4F has subunits p82 and p28. (Microbial infection) Interacts with potyvirus viral genome-linked protein (VPg); this interaction is possible in susceptible hosts but impaired in resistant plants. According to the redox status, the Cys-133-Cys-171 disulfide bridge may have a role in regulating protein function by affecting its ability to bind capped mRNA.

The protein resides in the nucleus. Its subcellular location is the cytoplasm. Its function is as follows. Component of the protein complex eIF4F, which is involved in the recognition of the mRNA cap, ATP-dependent unwinding of 5'-terminal secondary structure and recruitment of mRNA to the ribosome. Recognizes and binds the 7-methylguanosine-containing mRNA cap during an early step in the initiation of protein synthesis and facilitates ribosome binding by inducing the unwinding of the mRNAs secondary structures. Key component of recessive resistance to potyviruses. (Microbial infection) Susceptibility host factor required for viral infection by recruiting viral RNAs to the host ribosomal complex via an interaction with viral genome-linked protein (VPg). This Citrullus lanatus (Watermelon) protein is Eukaryotic translation initiation factor 4E-1.